Here is a 371-residue protein sequence, read N- to C-terminus: Phospho-N-acetylmuramoyl-pentapeptide-transferase (371 aa).

The next 10 helical transmembrane spans lie at 25–45 (YLTF…VAMG), 79–99 (TMGG…FADL), 104–124 (VWVV…DDYA), 139–159 (KLIA…IFAP), 179–199 (LVIN…AGFS), 210–230 (GLAI…AYLV), 247–267 (VGEL…FLWY), 274–294 (IFMG…IAVC), 299–319 (LVLG…MIQV), and 348–368 (TVVI…LATL).

The protein belongs to the glycosyltransferase 4 family. MraY subfamily. It depends on Mg(2+) as a cofactor.

Its subcellular location is the cell inner membrane. The catalysed reaction is UDP-N-acetyl-alpha-D-muramoyl-L-alanyl-gamma-D-glutamyl-meso-2,6-diaminopimeloyl-D-alanyl-D-alanine + di-trans,octa-cis-undecaprenyl phosphate = di-trans,octa-cis-undecaprenyl diphospho-N-acetyl-alpha-D-muramoyl-L-alanyl-D-glutamyl-meso-2,6-diaminopimeloyl-D-alanyl-D-alanine + UMP. It functions in the pathway cell wall biogenesis; peptidoglycan biosynthesis. Functionally, catalyzes the initial step of the lipid cycle reactions in the biosynthesis of the cell wall peptidoglycan: transfers peptidoglycan precursor phospho-MurNAc-pentapeptide from UDP-MurNAc-pentapeptide onto the lipid carrier undecaprenyl phosphate, yielding undecaprenyl-pyrophosphoryl-MurNAc-pentapeptide, known as lipid I. This is Phospho-N-acetylmuramoyl-pentapeptide-transferase from Caulobacter sp. (strain K31).